A 217-amino-acid chain; its full sequence is MEFVQIAIDGPAGAGKSTIAKRIAERLNITYIDTGAMYRALTYKVLANNIDITNEKTIIELAQNSNIQFLQENIYLDGKMINEEIRSIEINKKVSHVAKIKEVREILVDAQRKIALGQDVIMDGRDIGTHVLPNATLKIFLTASVQERALRRYLELKKKGIEVDIDELEKDIMNRDNIDSQRAFAPLVKAQDAIIIDTTGLTIEDVVERIINLLKGV.

Residue 10–18 (GPAGAGKST) participates in ATP binding.

It belongs to the cytidylate kinase family. Type 1 subfamily.

It localises to the cytoplasm. The enzyme catalyses CMP + ATP = CDP + ADP. The catalysed reaction is dCMP + ATP = dCDP + ADP. This is Cytidylate kinase from Alkaliphilus oremlandii (strain OhILAs) (Clostridium oremlandii (strain OhILAs)).